The chain runs to 322 residues: Pantothenate kinase (322 aa).

Residue 100-107 participates in ATP binding; it reads GSVAVGKS.

This sequence belongs to the prokaryotic pantothenate kinase family.

Its subcellular location is the cytoplasm. The catalysed reaction is (R)-pantothenate + ATP = (R)-4'-phosphopantothenate + ADP + H(+). The protein operates within cofactor biosynthesis; coenzyme A biosynthesis; CoA from (R)-pantothenate: step 1/5. The sequence is that of Pantothenate kinase from Brucella canis (strain ATCC 23365 / NCTC 10854 / RM-666).